Reading from the N-terminus, the 88-residue chain is Small ribosomal subunit protein uS17 (88 aa).

The protein belongs to the universal ribosomal protein uS17 family. Part of the 30S ribosomal subunit.

In terms of biological role, one of the primary rRNA binding proteins, it binds specifically to the 5'-end of 16S ribosomal RNA. The chain is Small ribosomal subunit protein uS17 from Pseudomonas fluorescens (strain ATCC BAA-477 / NRRL B-23932 / Pf-5).